We begin with the raw amino-acid sequence, 278 residues long: Trans-2,3-dihydro-3-hydroxyanthranilate isomerase (278 aa).

The active site involves glutamate 45.

The protein belongs to the PhzF family.

The enzyme catalyses (5S,6S)-6-amino-5-hydroxycyclohexa-1,3-diene-1-carboxyate = (1R,6S)-6-amino-5-oxocyclohex-2-ene-1-carboxylate. It functions in the pathway secondary metabolite biosynthesis; pyocyanine biosynthesis. Its function is as follows. Isomerase that catalyzes the condensation of two molecules of trans-2,3-dihydro-3-hydroxyanthranilic acid (DHHA) into the phenazine ring system. The final product is not yet known. This chain is Trans-2,3-dihydro-3-hydroxyanthranilate isomerase (phzF1), found in Pseudomonas aeruginosa (strain ATCC 15692 / DSM 22644 / CIP 104116 / JCM 14847 / LMG 12228 / 1C / PRS 101 / PAO1).